The chain runs to 108 residues: Small ribosomal subunit protein uS10 (108 aa).

Belongs to the universal ribosomal protein uS10 family. As to quaternary structure, part of the 30S ribosomal subunit.

In terms of biological role, involved in the binding of tRNA to the ribosomes. The chain is Small ribosomal subunit protein uS10 from Ehrlichia chaffeensis (strain ATCC CRL-10679 / Arkansas).